The chain runs to 175 residues: DM domain-containing protein mab-23 (175 aa).

The segment at residues 8–56 (CQLCANHGIFNQPKKGHKQKCPYRTCPCSLCALNTKRRALDQIERQLKH) is a DNA-binding region (DM). Positions 58–93 (NEPMTGQTATSMASPTPECPLSPTTPKMTPHTPTSG) are disordered. The span at 59 to 71 (EPMTGQTATSMAS) shows a compositional bias: polar residues. Over residues 81-91 (TTPKMTPHTPT) the composition is skewed to low complexity.

In terms of tissue distribution, expressed in a limited number of non-sex-specific tissues in males, including 6-8 unidentified neurons of the head, ventral body wall muscle, and the PHCL/R neurons.

It is found in the nucleus. Its function is as follows. Probable transcription factor that plays a role in the development of the dopaminergic neurons of the male-specific genital sensilla (simple sense organs) known as rays, by negatively regulating the activity of the transcription factor ast-1. Involved in male mating behavior, probably as a result of a role in the differentiation of male-specific diagonal muscles. Required for development of the male proctodeum. May be dispensable in hermaphrodites. The polypeptide is DM domain-containing protein mab-23 (Caenorhabditis elegans).